A 486-amino-acid polypeptide reads, in one-letter code: MTQFIEGKWVAGLGHEVTSINPANQEVIWNSKTATPEQVSQAVDAARNAQFDWFMLGFEGRLAIVEAYRDQLEANKAEMAEVIAQETGKPQWETATEAGAMIGKIGLSVAAYHKRTGTSESETPAGRAVLRHKPHGVVAVFGPYNFPGHLPNGHIVPALLAGNTVVFKPSELTPKVAELMLKLWEKAGLPAGVINLVQGEVETGKALAAHPQIDGLFFTGSSRTGHILHQQYAGDPGKILALEMGGNNPLIIKDVADTKAAVHDIIQSAYISAGQRCTCARRLYVEKGATGDALLEQLVAAIKQIKVGPWNAQPQPFMGSMISETAAKGMVEAQRNLLNLGANSLVELTHIEAGTGLVSPGLIDVTGVIELPDEEYFGPLLQVVRYSDFDEAIKLANTTRYGLSAGILADSREDYDYFLARIRAGIVNWNKQITGASGAAPFGGVGASGNHRASAFYAADYCAYPVASVEADAVSLPATLSPGLSL.

Position 220-225 (220-225) interacts with NAD(+); the sequence is GSSRTG. Active-site residues include Glu-243 and Cys-277.

This sequence belongs to the aldehyde dehydrogenase family. AstD subfamily.

The enzyme catalyses N-succinyl-L-glutamate 5-semialdehyde + NAD(+) + H2O = N-succinyl-L-glutamate + NADH + 2 H(+). It participates in amino-acid degradation; L-arginine degradation via AST pathway; L-glutamate and succinate from L-arginine: step 4/5. Functionally, catalyzes the NAD-dependent reduction of succinylglutamate semialdehyde into succinylglutamate. The polypeptide is N-succinylglutamate 5-semialdehyde dehydrogenase (Shewanella halifaxensis (strain HAW-EB4)).